Here is an 84-residue protein sequence, read N- to C-terminus: MSSGGLLLLLGLLTLWAEPTPISGQDRPKFCFLRPDFGRYGHPRPRFYYNPATNQCQGFLAQRSRENTNNFDTRDKCRQTCGRK.

The first 24 residues, 1–24 (MSSGGLLLLLGLLTLWAEPTPISG), serve as a signal peptide directing secretion. Residue Gln25 is modified to Pyrrolidone carboxylic acid. Residues 31-81 (CFLRPDFGRYGHPRPRFYYNPATNQCQGFLAQRSRENTNNFDTRDKCRQTC) form the BPTI/Kunitz inhibitor domain. Disulfide bonds link Cys31/Cys81 and Cys56/Cys77.

This sequence belongs to the venom Kunitz-type family. In terms of tissue distribution, expressed by the venom gland.

Its subcellular location is the secreted. Its function is as follows. Serine protease inhibitor. In Daboia russelii (Russel's viper), this protein is Kunitz-type serine protease inhibitor 2.